The following is a 299-amino-acid chain: Taste receptor type 2 member 19 (299 aa).

Met-1 is a topological domain (extracellular). Residues Met-2–Val-22 form a helical membrane-spanning segment. The Cytoplasmic portion of the chain corresponds to Ala-23–Arg-55. The chain crosses the membrane as a helical span at residues Ile-56 to Tyr-76. Topologically, residues Gly-77 to Ala-87 are extracellular. The chain crosses the membrane as a helical span at residues Trp-88 to Leu-108. Over Lys-109 to Ser-127 the chain is Cytoplasmic. Residues Val-128–Thr-148 form a helical membrane-spanning segment. Residues Met-149–Thr-181 lie on the Extracellular side of the membrane. Residue Asn-161 is glycosylated (N-linked (GlcNAc...) asparagine). A helical membrane pass occupies residues Leu-182–Leu-202. The Cytoplasmic portion of the chain corresponds to Cys-203–Lys-226. Residues Ala-227–Thr-247 form a helical membrane-spanning segment. The Extracellular segment spans residues Ser-248–Leu-259. A helical transmembrane segment spans residues Val-260–Ile-280. The Cytoplasmic portion of the chain corresponds to Met-281–Arg-299.

This sequence belongs to the G-protein coupled receptor T2R family. As to expression, expressed in subsets of taste receptor cells of the tongue and exclusively in gustducin-positive cells.

It localises to the membrane. Functionally, receptor that may play a role in the perception of bitterness and is gustducin-linked. May play a role in sensing the chemical composition of the gastrointestinal content. The activity of this receptor may stimulate alpha gustducin, mediate PLC-beta-2 activation and lead to the gating of TRPM5. The protein is Taste receptor type 2 member 19 (TAS2R19) of Homo sapiens (Human).